We begin with the raw amino-acid sequence, 576 residues long: Sulfite reductase [NADPH] hemoprotein beta-component (576 aa).

The segment covering Met-1–Asp-12 has biased composition (basic and acidic residues). The tract at residues Met-1–Thr-25 is disordered. [4Fe-4S] cluster contacts are provided by Cys-441, Cys-447, Cys-486, and Cys-490. Cys-490 provides a ligand contact to siroheme.

This sequence belongs to the nitrite and sulfite reductase 4Fe-4S domain family. In terms of assembly, alpha(8)-beta(8). The alpha component is a flavoprotein, the beta component is a hemoprotein. It depends on siroheme as a cofactor. Requires [4Fe-4S] cluster as cofactor.

The catalysed reaction is hydrogen sulfide + 3 NADP(+) + 3 H2O = sulfite + 3 NADPH + 4 H(+). Its pathway is sulfur metabolism; hydrogen sulfide biosynthesis; hydrogen sulfide from sulfite (NADPH route): step 1/1. In terms of biological role, component of the sulfite reductase complex that catalyzes the 6-electron reduction of sulfite to sulfide. This is one of several activities required for the biosynthesis of L-cysteine from sulfate. The sequence is that of Sulfite reductase [NADPH] hemoprotein beta-component from Nitrobacter hamburgensis (strain DSM 10229 / NCIMB 13809 / X14).